Here is a 443-residue protein sequence, read N- to C-terminus: UDP-N-acetylmuramate--L-alanine ligase (443 aa).

110–116 contributes to the ATP binding site; the sequence is GAHGKTS.

This sequence belongs to the MurCDEF family.

The protein resides in the cytoplasm. The enzyme catalyses UDP-N-acetyl-alpha-D-muramate + L-alanine + ATP = UDP-N-acetyl-alpha-D-muramoyl-L-alanine + ADP + phosphate + H(+). It functions in the pathway cell wall biogenesis; peptidoglycan biosynthesis. Its function is as follows. Cell wall formation. This Lactococcus lactis subsp. cremoris (strain SK11) protein is UDP-N-acetylmuramate--L-alanine ligase.